The chain runs to 503 residues: Probable cytosol aminopeptidase (503 aa).

Mn(2+) contacts are provided by K274 and D279. K286 is an active-site residue. D297, D356, and E358 together coordinate Mn(2+). Residue R360 is part of the active site.

It belongs to the peptidase M17 family. Mn(2+) is required as a cofactor.

It is found in the cytoplasm. The catalysed reaction is Release of an N-terminal amino acid, Xaa-|-Yaa-, in which Xaa is preferably Leu, but may be other amino acids including Pro although not Arg or Lys, and Yaa may be Pro. Amino acid amides and methyl esters are also readily hydrolyzed, but rates on arylamides are exceedingly low.. It catalyses the reaction Release of an N-terminal amino acid, preferentially leucine, but not glutamic or aspartic acids.. In terms of biological role, presumably involved in the processing and regular turnover of intracellular proteins. Catalyzes the removal of unsubstituted N-terminal amino acids from various peptides. The polypeptide is Probable cytosol aminopeptidase (Paraburkholderia phymatum (strain DSM 17167 / CIP 108236 / LMG 21445 / STM815) (Burkholderia phymatum)).